Consider the following 61-residue polypeptide: Large ribosomal subunit protein bL32 (61 aa).

The segment covering 1-16 has biased composition (basic residues); it reads MAVPKKKTSKSRKNMR. The tract at residues 1–20 is disordered; the sequence is MAVPKKKTSKSRKNMRRAHD.

The protein belongs to the bacterial ribosomal protein bL32 family.

This is Large ribosomal subunit protein bL32 from Pelobacter propionicus (strain DSM 2379 / NBRC 103807 / OttBd1).